The sequence spans 201 residues: Holliday junction branch migration complex subunit RuvA (201 aa).

The segment at M1–P64 is domain I. Positions N65–S140 are domain II. Positions S140–A144 are flexible linker. Residues S145–S201 are domain III.

This sequence belongs to the RuvA family. As to quaternary structure, homotetramer. Forms an RuvA(8)-RuvB(12)-Holliday junction (HJ) complex. HJ DNA is sandwiched between 2 RuvA tetramers; dsDNA enters through RuvA and exits via RuvB. An RuvB hexamer assembles on each DNA strand where it exits the tetramer. Each RuvB hexamer is contacted by two RuvA subunits (via domain III) on 2 adjacent RuvB subunits; this complex drives branch migration. In the full resolvosome a probable DNA-RuvA(4)-RuvB(12)-RuvC(2) complex forms which resolves the HJ.

Its subcellular location is the cytoplasm. Its function is as follows. The RuvA-RuvB-RuvC complex processes Holliday junction (HJ) DNA during genetic recombination and DNA repair, while the RuvA-RuvB complex plays an important role in the rescue of blocked DNA replication forks via replication fork reversal (RFR). RuvA specifically binds to HJ cruciform DNA, conferring on it an open structure. The RuvB hexamer acts as an ATP-dependent pump, pulling dsDNA into and through the RuvAB complex. HJ branch migration allows RuvC to scan DNA until it finds its consensus sequence, where it cleaves and resolves the cruciform DNA. This Treponema denticola (strain ATCC 35405 / DSM 14222 / CIP 103919 / JCM 8153 / KCTC 15104) protein is Holliday junction branch migration complex subunit RuvA.